A 345-amino-acid chain; its full sequence is Protein D345L (345 aa).

Belongs to the asfivirus D345L family. Interacts with IKKA/CHUK and IKBKB.

The protein resides in the host cytoplasm. Functionally, plays a role in the negative regulation of host NF-kappa-B signaling pathway. Mechanistically, recruits host IKKA/CHUK and IKBKB to suppress their kinase activity towards NFKBIA. This is Protein D345L from African swine fever virus (strain Badajoz 1971 Vero-adapted) (Ba71V).